The following is a 405-amino-acid chain: Imidazolonepropionase (405 aa).

Residues histidine 72 and histidine 74 each coordinate Fe(3+). Zn(2+) is bound by residues histidine 72 and histidine 74. 4-imidazolone-5-propanoate-binding residues include arginine 81, tyrosine 144, and histidine 177. Residue tyrosine 144 participates in N-formimidoyl-L-glutamate binding. Histidine 242 is a binding site for Fe(3+). Histidine 242 serves as a coordination point for Zn(2+). Residue glutamine 245 participates in 4-imidazolone-5-propanoate binding. Fe(3+) is bound at residue aspartate 317. Position 317 (aspartate 317) interacts with Zn(2+). Residues asparagine 319 and glycine 321 each contribute to the N-formimidoyl-L-glutamate site. Residue threonine 322 participates in 4-imidazolone-5-propanoate binding.

Belongs to the metallo-dependent hydrolases superfamily. HutI family. Zn(2+) is required as a cofactor. Fe(3+) serves as cofactor.

The protein resides in the cytoplasm. It carries out the reaction 4-imidazolone-5-propanoate + H2O = N-formimidoyl-L-glutamate. The protein operates within amino-acid degradation; L-histidine degradation into L-glutamate; N-formimidoyl-L-glutamate from L-histidine: step 3/3. Its function is as follows. Catalyzes the hydrolytic cleavage of the carbon-nitrogen bond in imidazolone-5-propanoate to yield N-formimidoyl-L-glutamate. It is the third step in the universal histidine degradation pathway. In Klebsiella pneumoniae subsp. pneumoniae (strain ATCC 700721 / MGH 78578), this protein is Imidazolonepropionase.